Reading from the N-terminus, the 158-residue chain is Ribosome-binding factor A (158 aa).

Positions 130 to 158 (TAQYAGDADPYKHDDEAEAEGDEFESDEE) are disordered. Residues 145 to 158 (EAEAEGDEFESDEE) show a composition bias toward acidic residues.

Belongs to the RbfA family. As to quaternary structure, monomer. Binds 30S ribosomal subunits, but not 50S ribosomal subunits or 70S ribosomes.

Its subcellular location is the cytoplasm. One of several proteins that assist in the late maturation steps of the functional core of the 30S ribosomal subunit. Associates with free 30S ribosomal subunits (but not with 30S subunits that are part of 70S ribosomes or polysomes). Required for efficient processing of 16S rRNA. May interact with the 5'-terminal helix region of 16S rRNA. This chain is Ribosome-binding factor A, found in Bifidobacterium longum subsp. infantis (strain ATCC 15697 / DSM 20088 / JCM 1222 / NCTC 11817 / S12).